We begin with the raw amino-acid sequence, 445 residues long: MRWLPGLLLIASIGFHQSLADRVLVLGETAAVKDTHSVFLNSVKERGHELTVRAADDSQLALFKHGQLIFDHLFILAPGVQVFGGSLSPSEISKFVDAGGNVLVAAGSNIGDALREIAAEHGFEFEEAGTSVIDHHNYDQTLDSGDHTTLVVGKDQLISAELIVGNSAKLHPVLFKGIGLVAGKTNNLALSIVRASGTAYSYDPKAVRATNPSIAGSRTLLVGGLQSRNNARIVFTGSSELFSNTFFSAKTNSVNPSVQGAQSGNADFATAITRWVMKESGVLRVKTVNHHKKGETVPPVEGYFITEDVVYTIEIEELKNGKWVPFQGKDVQLEFVRIDPFVRATLKNSNGRLSVAFKLPDVLGVFKFLVDYRRVGYTHLYDVQQVSVRPLWHTQYERFIRSAYPYYASSFSMMAGLVLFSIVYLYHKDTPVKGAKVLDSEKKKN.

The signal sequence occupies residues 1–20 (MRWLPGLLLIASIGFHQSLA). The Lumenal portion of the chain corresponds to 21–405 (DRVLVLGETA…YERFIRSAYP (385 aa)). A helical membrane pass occupies residues 406 to 426 (YYASSFSMMAGLVLFSIVYLY). The Cytoplasmic segment spans residues 427–445 (HKDTPVKGAKVLDSEKKKN).

The protein belongs to the DDOST 48 kDa subunit family. As to quaternary structure, component of the oligosaccharyltransferase (OST) complex.

The protein resides in the endoplasmic reticulum membrane. It functions in the pathway protein modification; protein glycosylation. Functionally, subunit of the oligosaccharyl transferase (OST) complex that catalyzes the initial transfer of a defined glycan (Glc(3)Man(9)GlcNAc(2) in eukaryotes) from the lipid carrier dolichol-pyrophosphate to an asparagine residue within an Asn-X-Ser/Thr consensus motif in nascent polypeptide chains, the first step in protein N-glycosylation. N-glycosylation occurs cotranslationally and the complex associates with the Sec61 complex at the channel-forming translocon complex that mediates protein translocation across the endoplasmic reticulum (ER). All subunits are required for a maximal enzyme activity. Required for the assembly of both SST3A- and SS3B-containing OST complexes. Required for normal lifespan. The protein is Dolichyl-diphosphooligosaccharide--protein glycosyltransferase 48 kDa subunit of Caenorhabditis elegans.